The chain runs to 47 residues: uncharacterized protein (47 aa).

Residues 2-47 (LRVRKRDGRLEEFSRAKIVRTCLRAGASKKIAEKVAEELKRGYTMG) form the ATP-cone domain.

This is an uncharacterized protein from Archaeoglobus fulgidus (strain ATCC 49558 / DSM 4304 / JCM 9628 / NBRC 100126 / VC-16).